Here is an 86-residue protein sequence, read N- to C-terminus: Small ribosomal subunit protein uS17 (86 aa).

The protein belongs to the universal ribosomal protein uS17 family. In terms of assembly, part of the 30S ribosomal subunit.

Functionally, one of the primary rRNA binding proteins, it binds specifically to the 5'-end of 16S ribosomal RNA. In Streptococcus mutans serotype c (strain ATCC 700610 / UA159), this protein is Small ribosomal subunit protein uS17.